A 52-amino-acid chain; its full sequence is MPQLSPINGFVILCSISLMLLTLLINGHFMLKPISSLTTPKLKMAYIKKLYF.

Residues 6-26 traverse the membrane as a helical segment; it reads PINGFVILCSISLMLLTLLIN.

It belongs to the ATPase protein 8 family. As to quaternary structure, F-type ATPases have 2 components, CF(1) - the catalytic core - and CF(0) - the membrane proton channel.

The protein localises to the mitochondrion membrane. In terms of biological role, mitochondrial membrane ATP synthase (F(1)F(0) ATP synthase or Complex V) produces ATP from ADP in the presence of a proton gradient across the membrane which is generated by electron transport complexes of the respiratory chain. F-type ATPases consist of two structural domains, F(1) - containing the extramembraneous catalytic core and F(0) - containing the membrane proton channel, linked together by a central stalk and a peripheral stalk. During catalysis, ATP synthesis in the catalytic domain of F(1) is coupled via a rotary mechanism of the central stalk subunits to proton translocation. Part of the complex F(0) domain. Minor subunit located with subunit a in the membrane. This Albinaria turrita (Door snail) protein is ATP synthase protein 8 (MT-ATP8).